A 453-amino-acid polypeptide reads, in one-letter code: Ribulose bisphosphate carboxylase large chain (453 aa).

Residues 1 to 2 constitute a propeptide that is removed on maturation; it reads MS. Proline 3 is subject to N-acetylproline. The residue at position 14 (lysine 14) is an N6,N6,N6-trimethyllysine. Positions 123 and 173 each coordinate substrate. Lysine 175 acts as the Proton acceptor in catalysis. Position 177 (lysine 177) interacts with substrate. Residues lysine 201, aspartate 203, and glutamate 204 each contribute to the Mg(2+) site. Lysine 201 carries the post-translational modification N6-carboxylysine. The Proton acceptor role is filled by histidine 294. The substrate site is built by arginine 295, histidine 327, and serine 379.

Belongs to the RuBisCO large chain family. Type I subfamily. Heterohexadecamer of 8 large chains and 8 small chains; disulfide-linked. The disulfide link is formed within the large subunit homodimers. It depends on Mg(2+) as a cofactor. Post-translationally, the disulfide bond which can form in the large chain dimeric partners within the hexadecamer appears to be associated with oxidative stress and protein turnover.

The protein localises to the plastid. Its subcellular location is the chloroplast. The catalysed reaction is 2 (2R)-3-phosphoglycerate + 2 H(+) = D-ribulose 1,5-bisphosphate + CO2 + H2O. The enzyme catalyses D-ribulose 1,5-bisphosphate + O2 = 2-phosphoglycolate + (2R)-3-phosphoglycerate + 2 H(+). Its function is as follows. RuBisCO catalyzes two reactions: the carboxylation of D-ribulose 1,5-bisphosphate, the primary event in carbon dioxide fixation, as well as the oxidative fragmentation of the pentose substrate in the photorespiration process. Both reactions occur simultaneously and in competition at the same active site. The sequence is that of Ribulose bisphosphate carboxylase large chain from Galium aparine (Catchweed bedstraw).